The following is a 347-amino-acid chain: DNA-directed RNA polymerase subunit alpha (347 aa).

The interval 1 to 243 is alpha N-terminal domain (alpha-NTD); it reads MLIKQGDRLI…DQISVFINFD (243 aa). The segment at 260-347 is alpha C-terminal domain (alpha-CTD); that stretch reads FNEHLFKSID…EWKRKQQHEA (88 aa).

It belongs to the RNA polymerase alpha chain family. As to quaternary structure, homodimer. The RNAP catalytic core consists of 2 alpha, 1 beta, 1 beta' and 1 omega subunit. When a sigma factor is associated with the core the holoenzyme is formed, which can initiate transcription.

It carries out the reaction RNA(n) + a ribonucleoside 5'-triphosphate = RNA(n+1) + diphosphate. In terms of biological role, DNA-dependent RNA polymerase catalyzes the transcription of DNA into RNA using the four ribonucleoside triphosphates as substrates. The chain is DNA-directed RNA polymerase subunit alpha from Nitratidesulfovibrio vulgaris (strain ATCC 29579 / DSM 644 / CCUG 34227 / NCIMB 8303 / VKM B-1760 / Hildenborough) (Desulfovibrio vulgaris).